We begin with the raw amino-acid sequence, 324 residues long: MADYQTIYTQIQARGPHITVSGEWGDNDRVGKPFYSYWLGKIGDAQIGPIYLGASGIAAFAFGSTAILIILFNMAAEVHFDPLQFFRQFFWLGLYPPKAQYGMGIPPLHDGGWWLMAGLFMTLSLGSWWIRVYSRARALGLGTHIAWNFAAAIFFVLCIGCIHPTLVGSWSEGVPFGIWPHIDWLTAFSIRYGNFYYCPWHGFSIGFAYGCGLLFAAHGATILAVARFGGDREIEQITDRGTAVERAALFWRWTIGFNATIESVHRWGWFFSLMVMVSASVGILLTGTFVDNWYLWCVKHGAAPDYPAYLPATPDPASLPGAPK.

Over 2-51 (ADYQTIYTQIQARGPHITVSGEWGDNDRVGKPFYSYWLGKIGDAQIGPIY) the chain is Cytoplasmic. Residues 52–76 (LGASGIAAFAFGSTAILIILFNMAA) form a helical membrane-spanning segment. Residues 77 to 110 (EVHFDPLQFFRQFFWLGLYPPKAQYGMGIPPLHD) lie on the Periplasmic side of the membrane. A helical transmembrane segment spans residues 111 to 137 (GGWWLMAGLFMTLSLGSWWIRVYSRAR). Over 138 to 142 (ALGLG) the chain is Cytoplasmic. A helical transmembrane segment spans residues 143–166 (THIAWNFAAAIFFVLCIGCIHPTL). Residues 167 to 197 (VGSWSEGVPFGIWPHIDWLTAFSIRYGNFYY) lie on the Periplasmic side of the membrane. (7R,8Z)-bacteriochlorophyll b-binding residues include His181 and His201. A helical transmembrane segment spans residues 198–223 (CPWHGFSIGFAYGCGLLFAAHGATIL). The Fe cation site is built by His218 and Glu233. At 224 to 259 (AVARFGGDREIEQITDRGTAVERAALFWRWTIGFNA) the chain is on the cytoplasmic side. Trp251 is an a ubiquinone binding site. A helical membrane pass occupies residues 260 to 284 (TIESVHRWGWFFSLMVMVSASVGIL). Residue His265 coordinates Fe cation. Topologically, residues 285–324 (LTGTFVDNWYLWCVKHGAAPDYPAYLPATPDPASLPGAPK) are periplasmic.

Belongs to the reaction center PufL/M/PsbA/D family. Reaction center is composed of four bacteriochlorophylls, two bacteriopheophytins, two ubiquinones, one iron, and three highly hydrophobic polypeptide chains (designated L, M, and H).

The protein localises to the cellular chromatophore membrane. In terms of biological role, the reaction center is a membrane-bound complex that mediates the initial photochemical event in the electron transfer process of photosynthesis. In Blastochloris viridis (Rhodopseudomonas viridis), this protein is Reaction center protein M chain (pufM).